The sequence spans 209 residues: HTH-type transcriptional repressor BepR (209 aa).

Residues 9 to 69 (AETREAILLA…SIIGRARFPQ (61 aa)) form the HTH tetR-type domain. Positions 32–51 (TLTEIACYAGVTRGAIYFHF) form a DNA-binding region, H-T-H motif.

Its function is as follows. Represses expression of bepDE. This chain is HTH-type transcriptional repressor BepR (bepR), found in Brucella suis biovar 1 (strain 1330).